Reading from the N-terminus, the 398-residue chain is MKILVLNCGSSSIKYQLLDMETESVLAIGKVERVGMEDAIFEYKGAGEKIKEIGTILDHTAGVRKVLKALTDPVHGVIQAPEEIAAVGHRVVHGGEAFVKSVIITDEVKRTLRELFDLAPLHNPANLTGILAAEAALPHAPGVAVFDTAFHATMPRKAFLYALPYAMYKGHKVRRYGFHGTSHKYVSQRAADLLGRPLEEVNLITCHLGNGSSVTAVQGGKSVDTSMGFTPLAGLIMGTRAGDLDPGVIPYIMAREEIGISEVNSMLNKHSGILGISGISSDMRQIEEEMEKGDPRAVETFEMMEYRLRKYIGAYAAVLGRVDGIVFTGGIGENSPLFRKAVCQNLGFLGVTFDEEANNCRGQERIISGPDSKVAVMVIPTNEELMIARETAELIRNR.

Asparagine 7 serves as a coordination point for Mg(2+). Residue lysine 14 participates in ATP binding. Arginine 90 contributes to the substrate binding site. Residue aspartate 147 is the Proton donor/acceptor of the active site. ATP is bound by residues 207 to 211 (HLGNG), 282 to 284 (DMR), and 330 to 334 (GIGEN). Glutamate 383 is a Mg(2+) binding site.

This sequence belongs to the acetokinase family. As to quaternary structure, homodimer. Mg(2+) is required as a cofactor. Mn(2+) serves as cofactor.

It is found in the cytoplasm. It carries out the reaction acetate + ATP = acetyl phosphate + ADP. It functions in the pathway metabolic intermediate biosynthesis; acetyl-CoA biosynthesis; acetyl-CoA from acetate: step 1/2. In terms of biological role, catalyzes the formation of acetyl phosphate from acetate and ATP. Can also catalyze the reverse reaction. The protein is Acetate kinase of Symbiobacterium thermophilum (strain DSM 24528 / JCM 14929 / IAM 14863 / T).